The chain runs to 629 residues: MDSVLRQSKAVCPFMKKATASSLRAMTTAARPAASPCGGAISKLQVLAHRCPVMGKAMAVQSARTGGRASAAPASFVHKAKLHTGRPREAQAVEGVFTGQKAGLPPHPPVKPTTATAANPSPAACTVSGNFGTKFNYEKFYENELEKKHKDKSYRYFNNINRLAKDFPRAHMATKEEKVAVWCANDYLGMGRNKHVLEAMHTTLDEYGAGAGGTRNISGHNKHAVELENSLAKLHATDAALVFSSCYVANDATLATLGSKLPDCVILSDSLNHASMIQGIRHSGAKKIIFKHNDVEDLEKKLAALPLHIPKIIAFESVYSMCGSIGPIEKFCDLAEKYGAITFNDEVHAVGMYGPHGAGVAEHLDWEAHQRGETKGTIADRIDIYSGTLGKAYGCVGGYIAGSAKLVDTIRSLAPGFIFTTTLPPAVMAGARAAIEYQMSYDGDRRLQQLHTRAVKEALADRDIPVIPNPSHIIPILVGNAELAKKASDKLLNDHQIYVQSINYPTVPVGQERLRITPTPGHTKQFRDHLVAALDSIWTELGIKRTSDWAAEGGFIGVGEAEAEPVAPLWTDEQLGIADAVAELRAQASDEKKGVINQLLESVALEQEREALNAAEEVADAAKAAAASA.

The transit peptide at 1 to 69 (MDSVLRQSKA…VQSARTGGRA (69 aa)) directs the protein to the mitochondrion. Residues R155, S268, and K287 each contribute to the substrate site. Pyridoxal 5'-phosphate contacts are provided by S320, H348, and T388. K391 is an active-site residue. K391 is subject to N6-(pyridoxal phosphate)lysine. Pyridoxal 5'-phosphate-binding residues include T420 and T421. T506 lines the substrate pocket.

It belongs to the class-II pyridoxal-phosphate-dependent aminotransferase family. As to quaternary structure, homodimer. The cofactor is pyridoxal 5'-phosphate.

Its subcellular location is the mitochondrion matrix. It catalyses the reaction succinyl-CoA + glycine + H(+) = 5-aminolevulinate + CO2 + CoA. Its pathway is porphyrin-containing compound metabolism; protoporphyrin-IX biosynthesis; 5-aminolevulinate from glycine: step 1/1. In terms of biological role, catalyzes the synthesis of 5-aminolevulinate (ALA) from succinyl-CoA and glycine, the first and rate-limiting step in heme biosynthesis. The sequence is that of 5-aminolevulinate synthase, mitochondrial (alv-1) from Neurospora crassa (strain ATCC 24698 / 74-OR23-1A / CBS 708.71 / DSM 1257 / FGSC 987).